Reading from the N-terminus, the 400-residue chain is CinA-like protein (400 aa).

This sequence belongs to the CinA family.

In Sulfurihydrogenibium sp. (strain YO3AOP1), this protein is CinA-like protein.